The chain runs to 306 residues: Acetyl-coenzyme A carboxylase carboxyl transferase subunit beta (306 aa).

A CoA carboxyltransferase N-terminal domain is found at 25-294 (LWIKCPETGE…TVVGANDDKT (270 aa)).

This sequence belongs to the AccD/PCCB family. In terms of assembly, acetyl-CoA carboxylase is a heterohexamer composed of biotin carboxyl carrier protein (AccB), biotin carboxylase (AccC) and two subunits each of ACCase subunit alpha (AccA) and ACCase subunit beta (AccD).

It is found in the cytoplasm. It catalyses the reaction N(6)-carboxybiotinyl-L-lysyl-[protein] + acetyl-CoA = N(6)-biotinyl-L-lysyl-[protein] + malonyl-CoA. It participates in lipid metabolism; malonyl-CoA biosynthesis; malonyl-CoA from acetyl-CoA: step 1/1. Its function is as follows. Component of the acetyl coenzyme A carboxylase (ACC) complex. Biotin carboxylase (BC) catalyzes the carboxylation of biotin on its carrier protein (BCCP) and then the CO(2) group is transferred by the transcarboxylase to acetyl-CoA to form malonyl-CoA. The polypeptide is Acetyl-coenzyme A carboxylase carboxyl transferase subunit beta (Allorhizobium ampelinum (strain ATCC BAA-846 / DSM 112012 / S4) (Agrobacterium vitis (strain S4))).